Reading from the N-terminus, the 158-residue chain is Transcription elongation factor GreA (158 aa).

Residues 53 to 73 are a coiled coil; sequence EQQSFIEGRIQEIEGKLSNAQ.

The protein belongs to the GreA/GreB family.

In terms of biological role, necessary for efficient RNA polymerase transcription elongation past template-encoded arresting sites. The arresting sites in DNA have the property of trapping a certain fraction of elongating RNA polymerases that pass through, resulting in locked ternary complexes. Cleavage of the nascent transcript by cleavage factors such as GreA or GreB allows the resumption of elongation from the new 3'terminus. GreA releases sequences of 2 to 3 nucleotides. This Halorhodospira halophila (strain DSM 244 / SL1) (Ectothiorhodospira halophila (strain DSM 244 / SL1)) protein is Transcription elongation factor GreA.